Reading from the N-terminus, the 1443-residue chain is Cleavage and polyadenylation specificity factor subunit 1 (1443 aa).

Disordered regions lie at residues proline 404–lysine 435, glutamate 546–arginine 570, glycine 715–phenylalanine 777, and phenylalanine 901–glycine 921. Residues glutamate 410–serine 419 are compositionally biased toward basic and acidic residues. A phosphoserine mark is found at serine 756 and serine 766. Over residues serine 758–alanine 775 the composition is skewed to basic and acidic residues. Positions lysine 893–proline 908 match the Nuclear localization signal motif.

It belongs to the CPSF1 family. In terms of assembly, component of the cleavage and polyadenylation specificity factor (CPSF) complex, composed of CPSF1, CPSF2, CPSF3, CPSF4 and FIP1L1. Found in a complex with CPSF1, FIP1L1 and PAPOLA. Interacts with FIP1L1, TENT2/GLD2 and SRRM1. Interacts with TUT1; the interaction is direct and mediates the recruitment of the CPSF complex on the 3'UTR of selected pre-mRNAs. In terms of processing, the N-terminus is blocked. As to expression, widely expressed, with high expression in the retina.

It is found in the nucleus. It localises to the nucleoplasm. Its function is as follows. Component of the cleavage and polyadenylation specificity factor (CPSF) complex that plays a key role in pre-mRNA 3'-end formation, recognizing the AAUAAA signal sequence and interacting with poly(A) polymerase and other factors to bring about cleavage and poly(A) addition. This subunit is involved in the RNA recognition step of the polyadenylation reaction. May play a role in eye morphogenesis and the development of retinal ganglion cell projections to the midbrain. The protein is Cleavage and polyadenylation specificity factor subunit 1 (CPSF1) of Homo sapiens (Human).